The primary structure comprises 449 residues: Cysteine--tRNA ligase (449 aa).

Cys-29 provides a ligand contact to Zn(2+). Positions 31–41 (PTVYDHLHIGN) match the 'HIGH' region motif. Zn(2+) contacts are provided by Cys-211, His-236, and Glu-240. The 'KMSKS' region motif lies at 269 to 273 (KMSKS). Residue Lys-272 coordinates ATP.

This sequence belongs to the class-I aminoacyl-tRNA synthetase family. As to quaternary structure, monomer. It depends on Zn(2+) as a cofactor.

Its subcellular location is the cytoplasm. The enzyme catalyses tRNA(Cys) + L-cysteine + ATP = L-cysteinyl-tRNA(Cys) + AMP + diphosphate. This chain is Cysteine--tRNA ligase, found in Methylocella silvestris (strain DSM 15510 / CIP 108128 / LMG 27833 / NCIMB 13906 / BL2).